The primary structure comprises 299 residues: Circadian clock oscillator protein KaiA (299 aa).

The 169-residue stretch at 1-169 folds into the KaiA N-terminal domain; that stretch reads MVSKLSLYLV…RLAEKLRERL (169 aa). Residues 3–135 form a psR domain, binds oxidized quinones region; that stretch reads SKLSLYLVTP…LHLAPSCALS (133 aa). Residues 170–178 are flexible linker; it reads GYLGVYYKR. Residues 179-287 enclose the KaiA C-terminal domain; sequence NPKYFYRSLS…CEMYRRSIPR (109 aa).

Homodimer. The KaiABC complex composition changes during the circadian cycle to control KaiC phosphorylation. Complexes KaiC(6), KaiA(2-4):KaiC(6), KaiB(6):KaiC(6) and KaiC(6):KaiB(6):KaiA(12) are among the most important forms, many form cooperatively. KaiA and CikA bind to the same region of the KaiB(fs) form and therefore compete.

Its function is as follows. Key component of the KaiABC oscillator complex, which constitutes the main circadian regulator in cyanobacteria. Complex composition changes during the circadian cycle to control KaiC phosphorylation. KaiA stimulates KaiC autophosphorylation, while KaiB sequesters KaiA, leading to KaiC autodephosphorylation. KaiA binding to the KaiC CII domain during the subjective day yields KaiA(2-4):KaiC(6) complexes which stimulate KaiC autophosphorylation. Phospho-Ser-431 KaiC accumulation triggers binding of KaiB during the subjective night to form the KaiB(6):KaiC(6) complex, leading to changes in the output regulators CikA and SasA. KaiB(6):KaiC(6) formation exposes a site for KaiA binding on KaiB that sequesters KaiA from KaiC's CII domain, making the KaiC(6):KaiB(6):KaiA(12) complex resulting in KaiC autodephosphorylation. Complete dephosphorylation of KaiC leads to dissociation of KaiA(2):KaiB(1), completing 1 cycle of the Kai oscillator. In terms of biological role, binds oxidized quinones via the N-terminal PsR domain, allowing it to sense redox changes and possibly mediate clock input. The chain is Circadian clock oscillator protein KaiA from Picosynechococcus sp. (strain ATCC 27264 / PCC 7002 / PR-6) (Agmenellum quadruplicatum).